A 324-amino-acid polypeptide reads, in one-letter code: 7,8-didemethyl-8-hydroxy-5-deazariboflavin synthase (324 aa).

Positions 4–239 (VTYSKNVFIP…QEVAIQIPPN (236 aa)) constitute a Radical SAM core domain. Cys-18, Cys-22, and Cys-25 together coordinate [4Fe-4S] cluster.

It belongs to the radical SAM superfamily. CofG family. Consists of two subunits, CofG and CofH. [4Fe-4S] cluster serves as cofactor.

It catalyses the reaction 5-amino-5-(4-hydroxybenzyl)-6-(D-ribitylimino)-5,6-dihydrouracil + S-adenosyl-L-methionine = 7,8-didemethyl-8-hydroxy-5-deazariboflavin + 5'-deoxyadenosine + L-methionine + NH4(+) + H(+). The protein operates within cofactor biosynthesis; coenzyme F0 biosynthesis. Catalyzes the radical-mediated synthesis of 7,8-didemethyl-8-hydroxy-5-deazariboflavin from 5-amino-5-(4-hydroxybenzyl)-6-(D-ribitylimino)-5,6-dihydrouracil. This is 7,8-didemethyl-8-hydroxy-5-deazariboflavin synthase from Archaeoglobus fulgidus (strain ATCC 49558 / DSM 4304 / JCM 9628 / NBRC 100126 / VC-16).